The primary structure comprises 1138 residues: Pesticidal crystal protein Cry7Ab (1138 aa).

The protein belongs to the delta endotoxin family.

Functionally, promotes colloidosmotic lysis by binding to the midgut epithelial cells of Coleoptera. The polypeptide is Pesticidal crystal protein Cry7Ab (cry7Ab) (Bacillus thuringiensis serovar kumamotoensis).